The following is a 267-amino-acid chain: Putative F-box protein At5g38810 (267 aa).

Residues 4 to 53 (RKTFDSIPDDLFVEIALRLSSKSIARCRCVSKLWASILYRQDFTELFITK) enclose the F-box domain.

The chain is Putative F-box protein At5g38810 from Arabidopsis thaliana (Mouse-ear cress).